A 266-amino-acid polypeptide reads, in one-letter code: 4-hydroxy-tetrahydrodipicolinate reductase (266 aa).

10-15 (GPRGRM) is an NAD(+) binding site. Lys-38 serves as a coordination point for NADP(+). NAD(+) is bound by residues 99–101 (GTT) and 125–128 (APNF). His-155 acts as the Proton donor/acceptor in catalysis. His-156 contributes to the (S)-2,3,4,5-tetrahydrodipicolinate binding site. Catalysis depends on Lys-159, which acts as the Proton donor. Residue 165–166 (GT) participates in (S)-2,3,4,5-tetrahydrodipicolinate binding.

The protein belongs to the DapB family.

It localises to the cytoplasm. The catalysed reaction is (S)-2,3,4,5-tetrahydrodipicolinate + NAD(+) + H2O = (2S,4S)-4-hydroxy-2,3,4,5-tetrahydrodipicolinate + NADH + H(+). It catalyses the reaction (S)-2,3,4,5-tetrahydrodipicolinate + NADP(+) + H2O = (2S,4S)-4-hydroxy-2,3,4,5-tetrahydrodipicolinate + NADPH + H(+). Its pathway is amino-acid biosynthesis; L-lysine biosynthesis via DAP pathway; (S)-tetrahydrodipicolinate from L-aspartate: step 4/4. Catalyzes the conversion of 4-hydroxy-tetrahydrodipicolinate (HTPA) to tetrahydrodipicolinate. The chain is 4-hydroxy-tetrahydrodipicolinate reductase from Bacillus mycoides (strain KBAB4) (Bacillus weihenstephanensis).